Reading from the N-terminus, the 345-residue chain is Ferrochelatase (345 aa).

Fe cation contacts are provided by His215 and Glu296.

The protein belongs to the ferrochelatase family.

It is found in the cytoplasm. The catalysed reaction is heme b + 2 H(+) = protoporphyrin IX + Fe(2+). It functions in the pathway porphyrin-containing compound metabolism; protoheme biosynthesis; protoheme from protoporphyrin-IX: step 1/1. Catalyzes the ferrous insertion into protoporphyrin IX. The polypeptide is Ferrochelatase (Rhodopseudomonas palustris (strain HaA2)).